The sequence spans 347 residues: MNEELLNEIPLLEDKAVFEIESASSLQDLEKVRLSYLGRKGVIKAYFDDLRKVEDTEKKRDLGAIINVLRNKLDQLIMNKESILKAEEVNFKLQNEAIDITLPVRPEKIGRAHPLSKVMNEVKLIFAHMGFRAVNGPDIEDEFHVFDALNTPSHHPAREEQDTFYLKNKINDKRMMLRTHTSSMQIRAMKKAKTFPIKIVAAGRVYRNDFDATHTPMFHQMEGLYVNENVNMGQLKFTIHHFLNKFFGDKELKIRFRNSFFPFTEPSAEVDISYKESKWIEVLGCGIVHPNVFQNVGIDHTKYSGFAFGIGIERLAMLKYQISDLRNFYDNKISWLSHYGFHFSSLR.

A Mg(2+)-binding site is contributed by Glu265.

Belongs to the class-II aminoacyl-tRNA synthetase family. Phe-tRNA synthetase alpha subunit type 1 subfamily. As to quaternary structure, tetramer of two alpha and two beta subunits. Requires Mg(2+) as cofactor.

The protein resides in the cytoplasm. The catalysed reaction is tRNA(Phe) + L-phenylalanine + ATP = L-phenylalanyl-tRNA(Phe) + AMP + diphosphate + H(+). The protein is Phenylalanine--tRNA ligase alpha subunit of Wolbachia sp. subsp. Brugia malayi (strain TRS).